A 137-amino-acid polypeptide reads, in one-letter code: Fluoride-specific ion channel FluC (137 aa).

4 helical membrane-spanning segments follow: residues 11–31, 42–62, 75–95, and 107–127; these read IAVS…SLWF, GTLF…ALAL, LIAV…LDTF, and GFYW…GIIL. Positions 82 and 85 each coordinate Na(+).

The protein belongs to the fluoride channel Fluc/FEX (TC 1.A.43) family.

It is found in the cell inner membrane. The enzyme catalyses fluoride(in) = fluoride(out). With respect to regulation, na(+) is not transported, but it plays an essential structural role and its presence is essential for fluoride channel function. Functionally, fluoride-specific ion channel. Important for reducing fluoride concentration in the cell, thus reducing its toxicity. The chain is Fluoride-specific ion channel FluC from Trichormus variabilis (strain ATCC 29413 / PCC 7937) (Anabaena variabilis).